The chain runs to 352 residues: tRNA pseudouridine synthase D (352 aa).

The Nucleophile role is filled by Asp-81. A TRUD domain is found at 157–303 (GVPNYFGAQR…MDHERRILRL (147 aa)).

It belongs to the pseudouridine synthase TruD family.

The enzyme catalyses uridine(13) in tRNA = pseudouridine(13) in tRNA. Responsible for synthesis of pseudouridine from uracil-13 in transfer RNAs. In Pseudomonas entomophila (strain L48), this protein is tRNA pseudouridine synthase D.